The following is a 263-amino-acid chain: DSGLGKTHLLKAIAHEIGNTKNKLVVKYYTSSDFRKEIVDSLQDGFKEIESTKEKLSKIDVLLIDDIQFLANSGKTNEIFFNLFNFFIENNKQIVLTSDKFPEQLNGFDKRLVSRFSQGLNVKVETPDIITAINIVDYKAKIVNLNLSEESKKYIASFFGSDVRKIEGIINKIEFSIIQDNSAAPKIIELEDINKFLEDYSFAPGGEITVQKIKNVVAQNYGISVKSIDSRLRMANIVKARHVAMFLTGEILKKNYSEIGVAF.

Residue Asp1 is a region of interest, domain I, interacts with DnaA modulators. Position 1 (Asp1) is a region of interest, domain II. Residues 1–177 form a domain III, AAA+ region region; sequence DSGLGKTHLL…GIINKIEFSI (177 aa). Residues Gly3, Gly5, Lys6, and Thr7 each contribute to the ATP site. Residues 178-263 form a domain IV, binds dsDNA region; sequence IQDNSAAPKI…KNYSEIGVAF (86 aa).

The protein belongs to the DnaA family. As to quaternary structure, oligomerizes as a right-handed, spiral filament on DNA at oriC.

It is found in the cytoplasm. Plays an essential role in the initiation and regulation of chromosomal replication. ATP-DnaA binds to the origin of replication (oriC) to initiate formation of the DNA replication initiation complex once per cell cycle. Binds the DnaA box (a 9 base pair repeat at the origin) and separates the double-stranded (ds)DNA. Forms a right-handed helical filament on oriC DNA; dsDNA binds to the exterior of the filament while single-stranded (ss)DNA is stabiized in the filament's interior. The ATP-DnaA-oriC complex binds and stabilizes one strand of the AT-rich DNA unwinding element (DUE), permitting loading of DNA polymerase. After initiation quickly degrades to an ADP-DnaA complex that is not apt for DNA replication. Binds acidic phospholipids. The chain is Chromosomal replication initiator protein DnaA from Spiroplasma apis.